We begin with the raw amino-acid sequence, 134 residues long: Acyl-CoA thioester hydrolase YbgC (134 aa).

The active site involves aspartate 18.

Belongs to the 4-hydroxybenzoyl-CoA thioesterase family.

It is found in the cell inner membrane. Functionally, thioesterase that appears to be involved in phospholipid metabolism. Some specific acyl-ACPs could be physiological substrates. Displays acyl-CoA thioesterase activity on malonyl-CoA in vitro, catalyzing the hydrolysis of the thioester bond. This is Acyl-CoA thioester hydrolase YbgC (ybgC) from Escherichia coli O157:H7.